Reading from the N-terminus, the 299-residue chain is Polyamine aminopropyltransferase (299 aa).

One can recognise a PABS domain in the interval 6-252; the sequence is IVLLFALLCT…SLPNQQALQQ (247 aa). S-methyl-5'-thioadenosine is bound by residues glutamine 36, glutamate 120, and 147 to 148; that span reads DA. Residue aspartate 168 is the Proton acceptor of the active site.

It belongs to the spermidine/spermine synthase family. Homodimer or homotetramer.

Its subcellular location is the cytoplasm. The enzyme catalyses S-adenosyl 3-(methylsulfanyl)propylamine + putrescine = S-methyl-5'-thioadenosine + spermidine + H(+). It participates in amine and polyamine biosynthesis; spermidine biosynthesis; spermidine from putrescine: step 1/1. Catalyzes the irreversible transfer of a propylamine group from the amino donor S-adenosylmethioninamine (decarboxy-AdoMet) to putrescine (1,4-diaminobutane) to yield spermidine. The chain is Polyamine aminopropyltransferase from Vibrio vulnificus (strain CMCP6).